Reading from the N-terminus, the 999-residue chain is Ulvan lyase, long isoform (999 aa).

Positions 1–21 (MKCLKTLLVSTTLLTAFSLNA) are cleaved as a signal peptide. 126–127 (SH) lines the substrate pocket. Histidine 127 serves as the catalytic Proton donor/acceptor. 3 residues coordinate Ca(2+): aspartate 189, aspartate 199, and lysine 201. Tyrosine 280 and arginine 297 together coordinate substrate. 3 residues coordinate Ca(2+): aspartate 300, aspartate 303, and tyrosine 305. Tyrosine 361 provides a ligand contact to substrate.

Belongs to the polysaccharide lyase 24 family.

Its function is as follows. Ulvan lyase involved in ulvan degradation. Ulvan is the main polysaccharide component of the Ulvales (green seaweed) cell wall. It is composed of disaccharide building blocks comprising 3-sulfated rhamnose (Rha3S) linked to D-glucuronic acid (GlcA), L-iduronic acid (IduA), or D-xylose (Xyl). Ulvan lyase catalyzes preferentially the endolytic cleavage of the glycosidic bond between Rha3S and the uronic acid GlcA, but not IduA, producing oligosaccharides that have unsaturated 4-deoxy-L-threo-hex-4-enopyranosiduronic acid (deltaUA) at the non-reducing end. The most abundant end products in the degradation of the ulvan polysaccharide were deltaUA-Rha3S disaccharides and deltaUA-Rha3S-IduA-Rha3S and deltaUA-Rha3S-Xyl-Rha3S tetrasaccharides. This is Ulvan lyase, long isoform from Alteromonas sp. (strain LOR).